A 530-amino-acid polypeptide reads, in one-letter code: Arginine--tRNA ligase (530 aa).

The short motif at 113–123 (ANPTGPLHIGH) is the 'HIGH' region element.

The protein belongs to the class-I aminoacyl-tRNA synthetase family. As to quaternary structure, monomer.

The protein localises to the cytoplasm. The catalysed reaction is tRNA(Arg) + L-arginine + ATP = L-arginyl-tRNA(Arg) + AMP + diphosphate. The sequence is that of Arginine--tRNA ligase from Campylobacter jejuni subsp. jejuni serotype O:2 (strain ATCC 700819 / NCTC 11168).